The primary structure comprises 451 residues: MAEVEALPGLKQPVDDAGLLEDANQVHTLVIPSGHIWRVELSSDEKLSLKVTAGIGEIFGTELANNVEYTFWDWKFGIYAVEELEIEWKCPQLHDRELSIVENTTAHNVYNLHFALEKMRSSTFDGPRIMVVGEKNTGKTALCRTLCSYAIKNKPYQPMFVNLNPVEPIFSPPGCVTAVPISSTLDAQLPRWGETMTSGATRLHGKQPIIKNFGFETIAENRSLYKLVTKKLFETVSERLQNDSLVHRSGCIVDSPPLENCDDEYSELVEAIVGLRINYLIILCNDNDKGREIYTKVSKIVNTYVGERLLRVPTMAGVFEKDDVYIRAQQRAAIREYFYGDTRTVLSPYNLGCDTSDITVWRPKSVLQGENTNLDTLEVAPVDSSTLQYALVAITYASRKSDSEEVLQAPILGFGLITELNEKRNKLKILLPVPGRLPPNAMILTSFRYLE.

Residues lysine 75 and 136–141 each bind ATP; that span reads NTGKTA.

This sequence belongs to the Clp1 family. Clp1 subfamily. As to quaternary structure, component of a pre-mRNA cleavage factor complex. Interacts directly with PCF11.

The protein resides in the nucleus. Functionally, required for endonucleolytic cleavage during polyadenylation-dependent pre-mRNA 3'-end formation. In Candida glabrata (strain ATCC 2001 / BCRC 20586 / JCM 3761 / NBRC 0622 / NRRL Y-65 / CBS 138) (Yeast), this protein is mRNA cleavage and polyadenylation factor CLP1.